Reading from the N-terminus, the 448-residue chain is Putative carbonic anhydrase 2 (448 aa).

An Alpha-carbonic anhydrase domain is found at 1-222; it reads AYRQTENLLY…PAERDVFRII (222 aa). H19 provides a ligand contact to Zn(2+). N-linked (GlcNAc...) asparagine glycans are attached at residues N139 and N198. A disordered region spans residues 229-448; it reads RREEDDERGD…DKGDDKGDDN (220 aa). Acidic residues predominate over residues 245 to 280; the sequence is DDDDNYDDDDYYNDDYSNDDYYDDDYYYDDYDDDTD. Composition is skewed to basic and acidic residues over residues 281-334 and 342-354; these read DDHK…DDSG and RDGR…RDRN. N-linked (GlcNAc...) asparagine glycosylation occurs at N314. Residues 357-368 show a composition bias toward gly residues; that stretch reads NGNGRENGGVRG. A compositionally biased stretch (basic and acidic residues) spans 370–379; it reads GNDRDGRRDN. Residue N385 is glycosylated (N-linked (GlcNAc...) asparagine). Over residues 386–421 the composition is skewed to basic and acidic residues; the sequence is GTRRGNGDDRGGRRNEDRGENRRGKDDQERESEDGR. Residues 422-435 are compositionally biased toward basic residues; it reads RRRRRFNGRRRRRG. Residues 436–448 are compositionally biased toward basic and acidic residues; sequence RGDDKGDDKGDDN.

The protein belongs to the alpha-carbonic anhydrase family. As to expression, component of the acid-insoluble and acid-soluble organic matrix of calcified layers of the shell (at protein level).

It localises to the secreted. The enzyme catalyses hydrogencarbonate + H(+) = CO2 + H2O. Its function is as follows. Reversible hydration of carbon dioxide. The chain is Putative carbonic anhydrase 2 from Lottia gigantea (Giant owl limpet).